Here is a 475-residue protein sequence, read N- to C-terminus: MEIOTIC F-BOX protein MOF (475 aa).

The tract at residues 1 to 58 (MRRERDATQIPENPMEGIPQTAAAAAAAAAAEASEPPRKRARVDGGGGGAGEEEEDRL) is disordered. Residues 22-33 (AAAAAAAAAAEA) are compositionally biased toward low complexity. One can recognise an F-box domain in the interval 55–91 (EDRLSDLPDCLLEDILAHLGSRQAVQTSVLSRRWRNL).

Belongs to the F-box protein family. FBX subfamily. As to quaternary structure, part of a SCF (SKP1-CUL1-F-box protein) E3 ubiquitin-protein ligase complex. Interacts (via F-box domain) directly with SKP1. In terms of tissue distribution, highly expressed in the stem, leaf and in the anther during meiosis. Weakly expressed in roots and lemma/palea.

The protein localises to the nucleus. Its subcellular location is the chromosome. The protein operates within protein modification; protein ubiquitination. In terms of biological role, probable component of a SCF (SKP1-CULLIN-F-box protein) E3 ubiquitin-protein ligase complex and may function through the ubiquitin-mediated protein degradation or signaling pathway. Required for male meiotic prophase I progression. Required for telomere bouquet formation, homologous chromosome pairing and for the formation of the synaptonemal complex (SC), which stabilizes initial chromosomal axial associations and promotes crossover formation. Involved in meiotic DNA double-strand break (DSB) end-processing and repair, and is important in the recruitment of DSB repair proteins to the DSB sites. The sequence is that of MEIOTIC F-BOX protein MOF from Oryza sativa subsp. japonica (Rice).